We begin with the raw amino-acid sequence, 898 residues long: Endoplasmic reticulum metallopeptidase 1 (898 aa).

An N-acetylmethionine modification is found at methionine 1. Residues 1–55 are disordered; sequence MEWSSESAAVRRHRGTAERREGEAAASHRQREASAQEDAKGVGRMWGKTENGGGS. The Cytoplasmic segment spans residues 1–66; that stretch reads MEWSSESAAV…VAKTALSEAR (66 aa). A compositionally biased stretch (basic and acidic residues) spans 29 to 41; that stretch reads RQREASAQEDAKG. Residues 67 to 87 traverse the membrane as a helical segment; sequence TALALALYLLALRALVQLSLQ. Residues 88–393 are Lumenal-facing; that stretch reads RLVLSRTSGL…SSSEYRHGSM (306 aa). A glycan (N-linked (GlcNAc...) asparagine) is linked at asparagine 176. Cysteine 198 and cysteine 216 form a disulfide bridge. Zn(2+)-binding residues include histidine 199 and aspartate 211. Glutamate 245 acts as the Proton acceptor in catalysis. Zn(2+)-binding residues include glutamate 246, glutamate 272, and histidine 348. Residues 394–414 form a helical membrane-spanning segment; sequence VFFDVLGLLVIAYPSRVGSII. Over 415–451 the chain is Cytoplasmic; the sequence is NYMVVMAVVLYLGKKLLRPKHRNANYMRDFLCGLGIT. A helical transmembrane segment spans residues 452–472; sequence FISWFTSLVTVLIIAVFISLI. The Lumenal segment spans residues 473–480; that stretch reads GQSLSWYN. The chain crosses the membrane as a helical span at residues 481–501; that stretch reads YFYIAVCLYGTATVAKIIFIH. At 502–515 the chain is on the cytoplasmic side; the sequence is TLAKRFYYMNASDL. Residues 516-538 form a helical membrane-spanning segment; that stretch reads YLGELFFDTSLFVHCAFLVALTY. Residues 539–542 lie on the Lumenal side of the membrane; that stretch reads QGFC. A helical transmembrane segment spans residues 543-562; sequence SAFMSAVWVVFPLLTKLCVY. Residues 563–573 are Cytoplasmic-facing; that stretch reads KDFKKHGAQGR. Residues 574–594 form a helical membrane-spanning segment; that stretch reads FVALYLLGMFIPYLYGLYLIW. At 595 to 615 the chain is on the lumenal side; that stretch reads AVFEMFTPILGRSGSEIPPDV. A helical membrane pass occupies residues 616–636; the sequence is VLASILAVCVMILSSYFITFI. At 637-645 the chain is on the cytoplasmic side; it reads YLVNSTKKT. A helical transmembrane segment spans residues 646–666; sequence ILTLILVCAVTFLLVCSGAFF. Residues 667 to 898 are Lumenal-facing; it reads PYSSNPESPK…WVSTYSLFVF (232 aa). Residue asparagine 724 is glycosylated (N-linked (GlcNAc...) asparagine).

It belongs to the peptidase M28 family. Zn(2+) is required as a cofactor.

The protein resides in the endoplasmic reticulum membrane. Within the ovary, required for the organization of somatic cells and oocytes into discrete follicular structures. The chain is Endoplasmic reticulum metallopeptidase 1 from Mus musculus (Mouse).